The sequence spans 336 residues: MLESDRLISSQSIVSEDAMDRAIRPLSLSEYVGQDSVSSQMQIFINAARKRNDPLDHVLIFGPPGLGKTTLANIIAHEMGVNIRQTSGPVIERAGDIAAILTNLQQNDVLFIDEIHRLSPVIEEILYPAMEDYKLDIMIGEGPAARSIKLELPPFTLIGATTRAGLLTSPLRDRFGIVQRLEYYSVDSLTQIVARSAHLLGVPTKPEGAREVALRSRGTPRIANRLLRRVRDYSEVKGNGIITVDMAQQALEMLEVDQHGFDLMDRKLLLAVIEHFNGGPVGIDSIAAAIGEEKGTIEDVLEPFLIQQGFLMRTPRGRIATSKAYQHFGFSAIEQE.

The segment at 4-184 (SDRLISSQSI…FGIVQRLEYY (181 aa)) is large ATPase domain (RuvB-L). ATP-binding positions include Ile23, Arg24, Gly65, Lys68, Thr69, Thr70, 131–133 (EDY), Arg174, Tyr184, and Arg221. A Mg(2+)-binding site is contributed by Thr69. The segment at 185–255 (SVDSLTQIVA…MAQQALEMLE (71 aa)) is small ATPAse domain (RuvB-S). The segment at 258–336 (QHGFDLMDRK…HFGFSAIEQE (79 aa)) is head domain (RuvB-H). Residues Arg313 and Arg318 each coordinate DNA.

The protein belongs to the RuvB family. Homohexamer. Forms an RuvA(8)-RuvB(12)-Holliday junction (HJ) complex. HJ DNA is sandwiched between 2 RuvA tetramers; dsDNA enters through RuvA and exits via RuvB. An RuvB hexamer assembles on each DNA strand where it exits the tetramer. Each RuvB hexamer is contacted by two RuvA subunits (via domain III) on 2 adjacent RuvB subunits; this complex drives branch migration. In the full resolvosome a probable DNA-RuvA(4)-RuvB(12)-RuvC(2) complex forms which resolves the HJ.

The protein resides in the cytoplasm. The catalysed reaction is ATP + H2O = ADP + phosphate + H(+). Its function is as follows. The RuvA-RuvB-RuvC complex processes Holliday junction (HJ) DNA during genetic recombination and DNA repair, while the RuvA-RuvB complex plays an important role in the rescue of blocked DNA replication forks via replication fork reversal (RFR). RuvA specifically binds to HJ cruciform DNA, conferring on it an open structure. The RuvB hexamer acts as an ATP-dependent pump, pulling dsDNA into and through the RuvAB complex. RuvB forms 2 homohexamers on either side of HJ DNA bound by 1 or 2 RuvA tetramers; 4 subunits per hexamer contact DNA at a time. Coordinated motions by a converter formed by DNA-disengaged RuvB subunits stimulates ATP hydrolysis and nucleotide exchange. Immobilization of the converter enables RuvB to convert the ATP-contained energy into a lever motion, pulling 2 nucleotides of DNA out of the RuvA tetramer per ATP hydrolyzed, thus driving DNA branch migration. The RuvB motors rotate together with the DNA substrate, which together with the progressing nucleotide cycle form the mechanistic basis for DNA recombination by continuous HJ branch migration. Branch migration allows RuvC to scan DNA until it finds its consensus sequence, where it cleaves and resolves cruciform DNA. The polypeptide is Holliday junction branch migration complex subunit RuvB (Legionella pneumophila (strain Lens)).